Consider the following 387-residue polypeptide: Glutamyl-tRNA reductase 1 (387 aa).

Substrate is bound by residues 45–48 (TCNR), serine 96, 101–103 (ETD), and glutamine 107. The active-site Nucleophile is the cysteine 46. Residue 175–180 (GAGSVG) participates in NADP(+) binding.

Belongs to the glutamyl-tRNA reductase family. As to quaternary structure, homodimer.

It catalyses the reaction (S)-4-amino-5-oxopentanoate + tRNA(Glu) + NADP(+) = L-glutamyl-tRNA(Glu) + NADPH + H(+). Its pathway is porphyrin-containing compound metabolism; protoporphyrin-IX biosynthesis; 5-aminolevulinate from L-glutamyl-tRNA(Glu): step 1/2. Catalyzes the NADPH-dependent reduction of glutamyl-tRNA(Glu) to glutamate 1-semialdehyde (GSA). The polypeptide is Glutamyl-tRNA reductase 1 (Pyrobaculum arsenaticum (strain DSM 13514 / JCM 11321 / PZ6)).